The following is a 601-amino-acid chain: Elongation factor 4 (601 aa).

In terms of domain architecture, tr-type G spans 7 to 189 (SNIRNFSIVA…AIVHRLPPPQ (183 aa)). Residues 19–24 (DHGKST) and 136–139 (NKVD) contribute to the GTP site.

This sequence belongs to the TRAFAC class translation factor GTPase superfamily. Classic translation factor GTPase family. LepA subfamily.

It is found in the cell inner membrane. The enzyme catalyses GTP + H2O = GDP + phosphate + H(+). In terms of biological role, required for accurate and efficient protein synthesis under certain stress conditions. May act as a fidelity factor of the translation reaction, by catalyzing a one-codon backward translocation of tRNAs on improperly translocated ribosomes. Back-translocation proceeds from a post-translocation (POST) complex to a pre-translocation (PRE) complex, thus giving elongation factor G a second chance to translocate the tRNAs correctly. Binds to ribosomes in a GTP-dependent manner. The chain is Elongation factor 4 from Rhodopseudomonas palustris (strain BisB18).